Here is a 128-residue protein sequence, read N- to C-terminus: uncharacterized protein (128 aa).

3 consecutive transmembrane segments (helical) span residues 30-50 (ILFTILSVAIIMVAFDSLGSS), 65-85 (VFRGNTAKGIAVVGIIVLGIQ), and 93-113 (WEVALVVVTAIIILFKAPDIV).

The protein resides in the cell membrane. This is an uncharacterized protein from Rickettsia prowazekii (strain Madrid E).